A 407-amino-acid polypeptide reads, in one-letter code: MSLKAIVFDRVLGKCSVKILDQLLLPYQTQYLTINTIDDGYRSIKSMQVRGAPAIAIVGVLSTLMECQLLLQESFVKTQSFYDLTQLEKILNERLDLLLSSRPTAVNLSNAITDLRKLISNDIGKTYNSLFQYACDIIDHDYADNFTMGENGAKHLLAQLEKEAFEGDFGVLTICNTGSLATSGYGTALGVIRSLYERTKKQISGDEQPKRTKTSNAKMVRVFPLETRPYNQGSRLTAYELLHDEIPSTLITDSSISYLVSTSKIPIKAAFVGADRIVKNGDTANKIGTYQLSIVCRHFGIKFYVVAPTTTFDSNTETGDKIVVEERPPNEFRFVQGTLIDGTDPTPVLNESKTPVKAKVGITPLDMPVWNPSFDITPYTHIDGIITEKGVFAKDENGNFHLETAFQ.

The Proton donor role is filled by Asp-275.

The protein belongs to the eIF-2B alpha/beta/delta subunits family. MtnA subfamily.

The protein resides in the cytoplasm. The protein localises to the nucleus. The enzyme catalyses 5-(methylsulfanyl)-alpha-D-ribose 1-phosphate = 5-(methylsulfanyl)-D-ribulose 1-phosphate. It functions in the pathway amino-acid biosynthesis; L-methionine biosynthesis via salvage pathway; L-methionine from S-methyl-5-thio-alpha-D-ribose 1-phosphate: step 1/6. In terms of biological role, catalyzes the interconversion of methylthioribose-1-phosphate (MTR-1-P) into methylthioribulose-1-phosphate (MTRu-1-P). The polypeptide is Methylthioribose-1-phosphate isomerase (Kluyveromyces lactis (strain ATCC 8585 / CBS 2359 / DSM 70799 / NBRC 1267 / NRRL Y-1140 / WM37) (Yeast)).